The primary structure comprises 101 residues: Small ribosomal subunit protein uS14 (101 aa).

Belongs to the universal ribosomal protein uS14 family. As to quaternary structure, part of the 30S ribosomal subunit. Contacts proteins S3 and S10.

In terms of biological role, binds 16S rRNA, required for the assembly of 30S particles and may also be responsible for determining the conformation of the 16S rRNA at the A site. The polypeptide is Small ribosomal subunit protein uS14 (Ruegeria pomeroyi (strain ATCC 700808 / DSM 15171 / DSS-3) (Silicibacter pomeroyi)).